Consider the following 209-residue polypeptide: Superoxide dismutase [Mn/Fe] (209 aa).

Fe(3+) is bound by residues histidine 38, histidine 90, aspartate 172, and histidine 176. Histidine 38, histidine 90, aspartate 172, and histidine 176 together coordinate Mn(2+).

It belongs to the iron/manganese superoxide dismutase family. Mn(2+) is required as a cofactor. Requires Fe(3+) as cofactor.

It carries out the reaction 2 superoxide + 2 H(+) = H2O2 + O2. Its function is as follows. Destroys superoxide anion radicals which are normally produced within the cells and which are toxic to biological systems. Catalyzes the dismutation of superoxide anion radicals into O2 and H2O2 by successive reduction and oxidation of the transition metal ion at the active site. In Rickettsia conorii (strain ATCC VR-613 / Malish 7), this protein is Superoxide dismutase [Mn/Fe] (sodB).